Here is a 512-residue protein sequence, read N- to C-terminus: Probable DNA ligase (512 aa).

Residue E208 participates in ATP binding. K210 functions as the N6-AMP-lysine intermediate in the catalytic mechanism. ATP-binding residues include R215, R230, E259, F299, R374, and K380.

This sequence belongs to the ATP-dependent DNA ligase family. Mg(2+) is required as a cofactor.

The enzyme catalyses ATP + (deoxyribonucleotide)n-3'-hydroxyl + 5'-phospho-(deoxyribonucleotide)m = (deoxyribonucleotide)n+m + AMP + diphosphate.. DNA ligase that seals nicks in double-stranded DNA during DNA replication, DNA recombination and DNA repair. In Streptomyces avermitilis (strain ATCC 31267 / DSM 46492 / JCM 5070 / NBRC 14893 / NCIMB 12804 / NRRL 8165 / MA-4680), this protein is Probable DNA ligase.